The chain runs to 334 residues: MEQNSRALIDGFNRKIDYLRMSVTDRCDFRCVYCMAEDMQFLPRQQILSLEELFQVAERFVALGTRKIRLTGGEPLVRQGIVDLCGRIAALPGLRELCLTSNGSQLGRLAQPLFDAGVTRLNISLDSLDADRFKQLTRTGDLAQVIAGIDAARQAGFRRTKLNCVVLKGRNDHELVDLVRFAIERELDITFIEEMPLGVISEHERGESFCSSDEVRARLAEQFTLVESTESSMGPARYWRLAEAANTRVGFISPHSHNFCATCNRVRLTVEGRLLLCLGNEHSVDLKHVLRAHPGNPERLEKAIRDSLHLKPYRHHFEVGGDVQILRFMNMTGG.

The Radical SAM core domain maps to 11 to 236 (GFNRKIDYLR…ESTESSMGPA (226 aa)). Residue R20 coordinates GTP. Residues C27 and C31 each coordinate [4Fe-4S] cluster. Residue Y33 coordinates S-adenosyl-L-methionine. Position 34 (C34) interacts with [4Fe-4S] cluster. Position 69 (R69) interacts with GTP. Residue G73 participates in S-adenosyl-L-methionine binding. T100 contacts GTP. An S-adenosyl-L-methionine-binding site is contributed by S124. K161 contributes to the GTP binding site. An S-adenosyl-L-methionine-binding site is contributed by M195. [4Fe-4S] cluster contacts are provided by C260 and C263. 265 to 267 (RVR) is a GTP binding site. [4Fe-4S] cluster is bound at residue C277.

This sequence belongs to the radical SAM superfamily. MoaA family. As to quaternary structure, monomer and homodimer. [4Fe-4S] cluster is required as a cofactor.

It carries out the reaction GTP + AH2 + S-adenosyl-L-methionine = (8S)-3',8-cyclo-7,8-dihydroguanosine 5'-triphosphate + 5'-deoxyadenosine + L-methionine + A + H(+). The protein operates within cofactor biosynthesis; molybdopterin biosynthesis. Functionally, catalyzes the cyclization of GTP to (8S)-3',8-cyclo-7,8-dihydroguanosine 5'-triphosphate. The sequence is that of GTP 3',8-cyclase from Pseudomonas putida (strain ATCC 700007 / DSM 6899 / JCM 31910 / BCRC 17059 / LMG 24140 / F1).